A 353-amino-acid polypeptide reads, in one-letter code: Photosystem II D2 protein (353 aa).

Thr-2 carries the post-translational modification N-acetylthreonine. Thr-2 bears the Phosphothreonine mark. A helical membrane pass occupies residues 41-61 (CAYFALGGWFTGTTFVTSWYT). His-118 lines the chlorophyll a pocket. Residues 125 to 141 (GFMLRQFELARSVQLRP) traverse the membrane as a helical segment. Residues Gln-130 and Asn-143 each contribute to the pheophytin a site. The chain crosses the membrane as a helical span at residues 153-166 (VFVSVFLIYPLGQS). Position 198 (His-198) interacts with chlorophyll a. A helical membrane pass occupies residues 208-228 (AALLCAIHGATVENTLFEDGD). A plastoquinone contacts are provided by His-215 and Phe-262. His-215 contributes to the Fe cation binding site. His-269 is a Fe cation binding site. The chain crosses the membrane as a helical span at residues 279-295 (GLWMSALGVVGLALNLR).

It belongs to the reaction center PufL/M/PsbA/D family. As to quaternary structure, PSII is composed of 1 copy each of membrane proteins PsbA, PsbB, PsbC, PsbD, PsbE, PsbF, PsbH, PsbI, PsbJ, PsbK, PsbL, PsbM, PsbT, PsbX, PsbY, PsbZ, Psb30/Ycf12, at least 3 peripheral proteins of the oxygen-evolving complex and a large number of cofactors. It forms dimeric complexes. The D1/D2 heterodimer binds P680, chlorophylls that are the primary electron donor of PSII, and subsequent electron acceptors. It shares a non-heme iron and each subunit binds pheophytin, quinone, additional chlorophylls, carotenoids and lipids. There is also a Cl(-1) ion associated with D1 and D2, which is required for oxygen evolution. The PSII complex binds additional chlorophylls, carotenoids and specific lipids. serves as cofactor.

It is found in the plastid. The protein resides in the chloroplast thylakoid membrane. It catalyses the reaction 2 a plastoquinone + 4 hnu + 2 H2O = 2 a plastoquinol + O2. Its function is as follows. Photosystem II (PSII) is a light-driven water:plastoquinone oxidoreductase that uses light energy to abstract electrons from H(2)O, generating O(2) and a proton gradient subsequently used for ATP formation. It consists of a core antenna complex that captures photons, and an electron transfer chain that converts photonic excitation into a charge separation. The D1/D2 (PsbA/PsbD) reaction center heterodimer binds P680, the primary electron donor of PSII as well as several subsequent electron acceptors. D2 is needed for assembly of a stable PSII complex. The polypeptide is Photosystem II D2 protein (Pelargonium hortorum (Common geranium)).